The primary structure comprises 185 residues: Elongation factor P (185 aa).

Belongs to the elongation factor P family.

It is found in the cytoplasm. It participates in protein biosynthesis; polypeptide chain elongation. Functionally, involved in peptide bond synthesis. Stimulates efficient translation and peptide-bond synthesis on native or reconstituted 70S ribosomes in vitro. Probably functions indirectly by altering the affinity of the ribosome for aminoacyl-tRNA, thus increasing their reactivity as acceptors for peptidyl transferase. This Pseudothermotoga lettingae (strain ATCC BAA-301 / DSM 14385 / NBRC 107922 / TMO) (Thermotoga lettingae) protein is Elongation factor P.